Reading from the N-terminus, the 604-residue chain is Glutamine--fructose-6-phosphate aminotransferase [isomerizing] (604 aa).

Catalysis depends on Cys2, which acts as the Nucleophile; for GATase activity. A Glutamine amidotransferase type-2 domain is found at Cys2 to Glu216. 2 consecutive SIS domains span residues Leu281 to Ala420 and Val453 to Pro594. Catalysis depends on Lys599, which acts as the For Fru-6P isomerization activity.

Homodimer.

The protein localises to the cytoplasm. It catalyses the reaction D-fructose 6-phosphate + L-glutamine = D-glucosamine 6-phosphate + L-glutamate. Catalyzes the first step in hexosamine metabolism, converting fructose-6P into glucosamine-6P using glutamine as a nitrogen source. The chain is Glutamine--fructose-6-phosphate aminotransferase [isomerizing] from Thermus thermophilus (strain ATCC BAA-163 / DSM 7039 / HB27).